Here is a 114-residue protein sequence, read N- to C-terminus: Ribonuclease P protein component (114 aa).

The protein belongs to the RnpA family. In terms of assembly, consists of a catalytic RNA component (M1 or rnpB) and a protein subunit.

The catalysed reaction is Endonucleolytic cleavage of RNA, removing 5'-extranucleotides from tRNA precursor.. RNaseP catalyzes the removal of the 5'-leader sequence from pre-tRNA to produce the mature 5'-terminus. It can also cleave other RNA substrates such as 4.5S RNA. The protein component plays an auxiliary but essential role in vivo by binding to the 5'-leader sequence and broadening the substrate specificity of the ribozyme. The polypeptide is Ribonuclease P protein component (Borrelia duttonii (strain Ly)).